Consider the following 346-residue polypeptide: D-alanine--D-alanine ligase (346 aa).

Positions 133 to 327 (KLYAKSVGVK…ALADQISLEK (195 aa)) constitute an ATP-grasp domain. 159 to 211 (LSFPCIIKPARLGSSIGISIVKDEKDLEYAKDVGFEFDNDLVVEEFKNNIKEY) is a binding site for ATP. Residues Asp284, Glu296, and Asn298 each contribute to the Mg(2+) site.

The protein belongs to the D-alanine--D-alanine ligase family. It depends on Mg(2+) as a cofactor. Mn(2+) serves as cofactor.

The protein resides in the cytoplasm. It catalyses the reaction 2 D-alanine + ATP = D-alanyl-D-alanine + ADP + phosphate + H(+). It participates in cell wall biogenesis; peptidoglycan biosynthesis. Cell wall formation. This chain is D-alanine--D-alanine ligase, found in Campylobacter jejuni subsp. jejuni serotype O:23/36 (strain 81-176).